Here is a 404-residue protein sequence, read N- to C-terminus: Probable ribosomal oxygenase HI_0396 (404 aa).

One can recognise a JmjC domain in the interval 102–231 (ELGQLWNKFG…LIDGISKGFC (130 aa)). Positions 135, 137, and 199 each coordinate Fe cation.

It belongs to the ROX family. The cofactor is Fe(2+).

Its function is as follows. Oxygenase that catalyzes the hydroxylation of a ribosomal protein. The sequence is that of Probable ribosomal oxygenase HI_0396 from Haemophilus influenzae (strain ATCC 51907 / DSM 11121 / KW20 / Rd).